The primary structure comprises 477 residues: Stromelysin-3 (477 aa).

The first 17 residues, 1–17, serve as a signal peptide directing secretion; it reads MHLLILLPALCVLGAHS. The propeptide at 18-85 is activation peptide; the sequence is APLSYTYLQH…SSSGRNRQKR (68 aa). The tract at residues 64–83 is disordered; the sequence is RCGVPDIPAPPDSSSGRNRQ. Residues C65, H152, and D154 each contribute to the Zn(2+) site. Residues D159, G160, G162, and I164 each coordinate Ca(2+). Positions 167, 180, and 203 each coordinate Zn(2+). E204 is an active-site residue. Zn(2+)-binding residues include H207 and H213. Cysteines 279 and 466 form a disulfide. Hemopexin repeat units follow at residues 280-324, 325-369, 370-418, and 419-466; these read KTNF…WRGI, PDTV…GISV, TQIQ…WRGV, and PKGI…FFNC.

This sequence belongs to the peptidase M10A family. The cofactor is Ca(2+). It depends on Zn(2+) as a cofactor. Expressed in fibroblast cells that are activated by thyroid hormone. High levels in resorbing tail.

The protein resides in the secreted. The protein localises to the extracellular space. Its subcellular location is the extracellular matrix. Functionally, may be involved in the modification of the extracellular matrix during metamorphic apoptosis. This is Stromelysin-3 (mmp11) from Xenopus laevis (African clawed frog).